The chain runs to 154 residues: Ribosomal RNA large subunit methyltransferase H (154 aa).

Glycine 102 provides a ligand contact to S-adenosyl-L-methionine.

This sequence belongs to the RNA methyltransferase RlmH family. In terms of assembly, homodimer.

It is found in the cytoplasm. The enzyme catalyses pseudouridine(1915) in 23S rRNA + S-adenosyl-L-methionine = N(3)-methylpseudouridine(1915) in 23S rRNA + S-adenosyl-L-homocysteine + H(+). Functionally, specifically methylates the pseudouridine at position 1915 (m3Psi1915) in 23S rRNA. The chain is Ribosomal RNA large subunit methyltransferase H from Caulobacter sp. (strain K31).